Here is a 269-residue protein sequence, read N- to C-terminus: Phosphonoacetaldehyde hydrolase (269 aa).

The active-site Nucleophile is Asp10. Mg(2+)-binding residues include Asp10 and Ala12. Lys52 functions as the Schiff-base intermediate with substrate in the catalytic mechanism. Residue Asp186 participates in Mg(2+) binding.

Belongs to the HAD-like hydrolase superfamily. PhnX family. In terms of assembly, homodimer. It depends on Mg(2+) as a cofactor.

The catalysed reaction is phosphonoacetaldehyde + H2O = acetaldehyde + phosphate + H(+). In terms of biological role, involved in phosphonate degradation. This is Phosphonoacetaldehyde hydrolase from Salmonella heidelberg (strain SL476).